The chain runs to 488 residues: Dipeptidase 3 (488 aa).

The signal sequence occupies residues 1–35; sequence MQPTGPEGPRALSLRPLGHRLSLLGVLLIIPSLWV. Residues 41 to 60 are compositionally biased toward low complexity; it reads TPSLSSAPTSPGASSAMTTP. The disordered stretch occupies residues 41–74; it reads TPSLSSAPTSPGASSAMTTPGIPNDTTTSGVTSD. Disulfide bonds link Cys143/Cys222 and Cys294/Cys326. The N-linked (GlcNAc...) asparagine glycan is linked to Asn331. Residue Ser459 is the site of GPI-anchor amidated serine attachment. Positions 460–487 are cleaved as a propeptide — removed in mature form; the sequence is KAPPCPLLGLVAAVTSPAFTLWLCCSGH.

Belongs to the metallo-dependent hydrolases superfamily. Peptidase M19 family. In terms of assembly, homodimer; disulfide-linked. Interacts with TEX101; co-localized on the cell surface of spermatocytes, spermatids, and testicular spermatozoa, co-localized only in cytoplasmic droplets of caput and corpus epididymal sperm.

The protein resides in the membrane. Functionally, lacks dipeptidase activity and is unable to hydrolyze cystinyl-bis-glycine, leukotriene D4 and the beta-lactam antibiotic imipenem. The absence of activity may be due to the inability of serine (instead of aspartate found in DPEP1/2) at position 356 to function as the acid/base catalyst and activate the nucleophilic water/hydroxide. The polypeptide is Dipeptidase 3 (Dpep3) (Rattus norvegicus (Rat)).